The chain runs to 131 residues: Translation initiation factor 5A (131 aa).

Lys37 carries the hypusine modification.

This sequence belongs to the eIF-5A family.

Its subcellular location is the cytoplasm. Functions by promoting the formation of the first peptide bond. The protein is Translation initiation factor 5A (eIF5A) of Methanococcus maripaludis (strain C5 / ATCC BAA-1333).